A 771-amino-acid chain; its full sequence is U3 small nucleolar RNA-associated protein 14 homolog A (771 aa).

The segment at Pro-23–Ala-49 is disordered. Ser-29, Ser-31, Ser-52, Ser-77, and Ser-81 each carry phosphoserine. Residues Glu-40–Ala-67 adopt a coiled-coil conformation. Lys-122 is covalently cross-linked (Glycyl lysine isopeptide (Lys-Gly) (interchain with G-Cter in SUMO2)). Thr-205 bears the Phosphothreonine mark. Coiled coils occupy residues Ser-216–Arg-290 and Leu-317–Glu-347. Disordered stretches follow at residues Thr-334–Glu-355 and Met-367–Gln-557. Residues Glu-342–Glu-355 show a composition bias toward acidic residues. Residues Leu-399–Leu-436 are compositionally biased toward basic and acidic residues. Phosphoserine occurs at positions 405 and 407. At Arg-433 the chain carries Citrulline. A phosphoserine mark is found at Ser-437 and Ser-445. Lys-449 is covalently cross-linked (Glycyl lysine isopeptide (Lys-Gly) (interchain with G-Cter in SUMO2)). Residue Ser-453 is modified to Phosphoserine. Residues Arg-504–Pro-529 are compositionally biased toward basic and acidic residues. A Glycyl lysine isopeptide (Lys-Gly) (interchain with G-Cter in SUMO2) cross-link involves residue Lys-519. A compositionally biased stretch (polar residues) spans Gly-535–Asn-544. A compositionally biased stretch (basic and acidic residues) spans Asp-547–Gln-557. Ser-569 bears the Phosphoserine mark. A Citrulline modification is found at Arg-589. Lys-733 participates in a covalent cross-link: Glycyl lysine isopeptide (Lys-Gly) (interchain with G-Cter in SUMO2). The segment covering Arg-740–Gln-751 has biased composition (polar residues). A disordered region spans residues Arg-740–Asp-771. Residues Asn-753–Asp-771 are compositionally biased toward basic residues.

The protein belongs to the UTP14 family. Interacts with DHX37. In terms of processing, citrullinated by PADI4. In terms of tissue distribution, ubiquitously expressed.

Its subcellular location is the nucleus. The protein localises to the nucleolus. Functionally, may be required for ribosome biogenesis. This chain is U3 small nucleolar RNA-associated protein 14 homolog A (UTP14A), found in Homo sapiens (Human).